The chain runs to 306 residues: UDP-3-O-acyl-N-acetylglucosamine deacetylase (306 aa).

Positions 81, 241, and 245 each coordinate Zn(2+). Catalysis depends on histidine 268, which acts as the Proton donor.

This sequence belongs to the LpxC family. Requires Zn(2+) as cofactor.

It carries out the reaction a UDP-3-O-[(3R)-3-hydroxyacyl]-N-acetyl-alpha-D-glucosamine + H2O = a UDP-3-O-[(3R)-3-hydroxyacyl]-alpha-D-glucosamine + acetate. The protein operates within glycolipid biosynthesis; lipid IV(A) biosynthesis; lipid IV(A) from (3R)-3-hydroxytetradecanoyl-[acyl-carrier-protein] and UDP-N-acetyl-alpha-D-glucosamine: step 2/6. In terms of biological role, catalyzes the hydrolysis of UDP-3-O-myristoyl-N-acetylglucosamine to form UDP-3-O-myristoylglucosamine and acetate, the committed step in lipid A biosynthesis. This is UDP-3-O-acyl-N-acetylglucosamine deacetylase from Hydrogenovibrio crunogenus (strain DSM 25203 / XCL-2) (Thiomicrospira crunogena).